A 149-amino-acid polypeptide reads, in one-letter code: L-alanine exporter AlaE (149 aa).

The next 4 membrane-spanning stretches (helical) occupy residues 16-36, 46-66, 85-105, and 112-132; these read FAMV…LSGM, LVAI…RDLI, VLAY…TVGA, and AAVS…GYFL.

It belongs to the AlaE exporter family.

The protein resides in the cell inner membrane. Exports L-alanine. This Salmonella arizonae (strain ATCC BAA-731 / CDC346-86 / RSK2980) protein is L-alanine exporter AlaE.